The following is a 126-amino-acid chain: uncharacterized protein (126 aa).

The HTH hxlR-type domain occupies 20 to 118 (CPSREVLKHV…WIELNLPEVL (99 aa)).

This is an uncharacterized protein from Escherichia coli (strain K12).